We begin with the raw amino-acid sequence, 338 residues long: Acetoin:2,6-dichlorophenolindophenol oxidoreductase subunit beta (338 aa).

Tetramer of 2 alpha and 2 beta subunits.

The protein operates within ketone degradation; acetoin degradation. Catalyzes the 2,6-dichlorophenolindophenol-dependent cleavage of acetoin into acetate and acetaldehyde, in vitro. The beta subunit is probably not the catalytic subunit of the enzyme. This chain is Acetoin:2,6-dichlorophenolindophenol oxidoreductase subunit beta (acoB), found in Cupriavidus necator (strain ATCC 17699 / DSM 428 / KCTC 22496 / NCIMB 10442 / H16 / Stanier 337) (Ralstonia eutropha).